The chain runs to 837 residues: Protein translocase subunit SecA (837 aa).

Residues Gln-85, 103–107 (GEGKT), and Asp-493 each bind ATP. The Zn(2+) site is built by Cys-821, Cys-823, Cys-832, and His-833.

Belongs to the SecA family. Monomer and homodimer. Part of the essential Sec protein translocation apparatus which comprises SecA, SecYEG and auxiliary proteins SecDF. Other proteins may also be involved. Zn(2+) is required as a cofactor.

Its subcellular location is the cell membrane. It is found in the cytoplasm. It carries out the reaction ATP + H2O + cellular proteinSide 1 = ADP + phosphate + cellular proteinSide 2.. Its function is as follows. Part of the Sec protein translocase complex. Interacts with the SecYEG preprotein conducting channel. Has a central role in coupling the hydrolysis of ATP to the transfer of proteins into and across the cell membrane, serving as an ATP-driven molecular motor driving the stepwise translocation of polypeptide chains across the membrane. This chain is Protein translocase subunit SecA, found in Streptococcus pneumoniae serotype 19F (strain G54).